The sequence spans 142 residues: Gonadotropin subunit beta-2 (142 aa).

Positions 1 to 23 (MLGLHVGTLISLFLCILLEPVEG) are cleaved as a signal peptide. 6 cysteine pairs are disulfide-bonded: Cys-29/Cys-77, Cys-43/Cys-92, Cys-46/Cys-130, Cys-54/Cys-108, Cys-58/Cys-110, and Cys-113/Cys-120. A glycan (N-linked (GlcNAc...) asparagine) is linked at Asn-33.

Belongs to the glycoprotein hormones subunit beta family. In terms of assembly, heterodimer of an alpha and a beta chain.

Its subcellular location is the secreted. Functionally, involved in gametogenesis and steroidogenesis. The sequence is that of Gonadotropin subunit beta-2 (cgbb) from Oncorhynchus keta (Chum salmon).